A 418-amino-acid chain; its full sequence is Actin-related protein 3-B (418 aa).

Belongs to the actin family. ARP3 subfamily. As to quaternary structure, component of the Arp2/3 complex composed of actr2/arp2, actr3/arp3, arpc1 (arpc1a or arpc1b), arpc2, arpc3, arpc4 and arpc5.

It localises to the cytoplasm. Its subcellular location is the cytoskeleton. The protein resides in the cell projection. The protein localises to the nucleus. Functionally, ATP-binding component of the Arp2/3 complex, a multiprotein complex that mediates actin polymerization upon stimulation by nucleation-promoting factor (NPF). The Arp2/3 complex mediates the formation of branched actin networks in the cytoplasm, providing the force for cell motility. Seems to contact the pointed end of the daughter actin filament. In addition to its role in the cytoplasmic cytoskeleton, the Arp2/3 complex also promotes actin polymerization in the nucleus, thereby regulating gene transcription and repair of damaged DNA. The Arp2/3 complex promotes homologous recombination (HR) repair in response to DNA damage by promoting nuclear actin polymerization, leading to drive motility of double-strand breaks (DSBs). The protein is Actin-related protein 3-B (actr3-b) of Xenopus laevis (African clawed frog).